A 503-amino-acid polypeptide reads, in one-letter code: D-xylose-proton symporter-like 2 (503 aa).

Polar residues predominate over residues 1 to 15; it reads MALDPEQQQPISSVS. The segment at 1 to 32 is disordered; it reads MALDPEQQQPISSVSREFGKSSGEISPEREPL. At Ala-2 the chain carries N-acetylalanine. Residue Ser-26 is modified to Phosphoserine. The next 12 membrane-spanning stretches (helical) occupy residues 42–62, 99–119, 124–144, 146–166, 187–207, 213–233, 305–325, 346–366, 375–395, 400–420, 437–457, and 467–487; these read YSVVAAILPFLFPALGGLLYG, GSLYGALFGSIVAFTIADVIG, LILAALLYLVGALVTALAPTY, VLIIGRVIYGVSVGLAMHAAP, FFIVLGMVGGYGIGSLTVNVH, MYATSVPLAVIMGIGMWWLPA, ALIIGGGLVLFQQITGQPSVL, VSILLGLLKLIMTGVAVVVID, LGGVGGMVVSLFLLGSYYLFF, VVAVVALLLYVGCYQLSFGPI, GLSLAVLVNFGANALVTFAFS, and ILFCGFGVICVLSLVFIFFIV.

This sequence belongs to the major facilitator superfamily. Sugar transporter (TC 2.A.1.1) family.

The protein resides in the membrane. This is D-xylose-proton symporter-like 2 from Arabidopsis thaliana (Mouse-ear cress).